Reading from the N-terminus, the 151-residue chain is uncharacterized protein (151 aa).

The segment at Pro123–Gln151 is disordered. The span at Leu136–Gln151 shows a compositional bias: basic and acidic residues.

This is an uncharacterized protein from Triticum aestivum (Wheat).